Reading from the N-terminus, the 347-residue chain is UPF0284 protein LS215_0030 (347 aa).

The protein belongs to the UPF0284 family.

This Saccharolobus islandicus (strain L.S.2.15 / Lassen #1) (Sulfolobus islandicus) protein is UPF0284 protein LS215_0030.